The following is a 188-amino-acid chain: UPF0301 protein XAC2918 (188 aa).

It belongs to the UPF0301 (AlgH) family.

The chain is UPF0301 protein XAC2918 from Xanthomonas axonopodis pv. citri (strain 306).